Consider the following 140-residue polypeptide: Nucleoside diphosphate kinase (140 aa).

ATP-binding residues include lysine 11, phenylalanine 59, arginine 87, threonine 93, arginine 104, and asparagine 114. Histidine 117 functions as the Pros-phosphohistidine intermediate in the catalytic mechanism.

This sequence belongs to the NDK family. As to quaternary structure, homotetramer. Mg(2+) serves as cofactor.

Its subcellular location is the cytoplasm. The enzyme catalyses a 2'-deoxyribonucleoside 5'-diphosphate + ATP = a 2'-deoxyribonucleoside 5'-triphosphate + ADP. It carries out the reaction a ribonucleoside 5'-diphosphate + ATP = a ribonucleoside 5'-triphosphate + ADP. Its function is as follows. Major role in the synthesis of nucleoside triphosphates other than ATP. The ATP gamma phosphate is transferred to the NDP beta phosphate via a ping-pong mechanism, using a phosphorylated active-site intermediate. The polypeptide is Nucleoside diphosphate kinase (Gluconacetobacter diazotrophicus (strain ATCC 49037 / DSM 5601 / CCUG 37298 / CIP 103539 / LMG 7603 / PAl5)).